Consider the following 1857-residue polypeptide: Peripheral-type benzodiazepine receptor-associated protein 1 (1857 aa).

3 disordered regions span residues 1 to 103, 284 to 321, and 565 to 629; these read MEQL…RPED, QRETLPLPPSWPPGPALQARAGAPAPGAPGEATPQEDA, and PKDL…DTAS. The segment covering 55-67 has biased composition (basic and acidic residues); it reads LRSEESSKPKGDG. The span at 87–96 shows a compositional bias: polar residues; that stretch reads LGQQASSSGP. Pro residues predominate over residues 289–298; it reads PLPPSWPPGP. Low complexity-rich tracts occupy residues 299–316 and 603–616; these read ALQARAGAPAPGAPGEAT and SLSNSSHSESIHNS. Residues 653-720 enclose the SH3 1 domain; it reads ARIQVFLARY…PSNFVERVSD (68 aa). Residues 729 to 789 form a disordered region; sequence PELADLSHSS…PSPEGLGEPP (61 aa). Residues 755-764 are compositionally biased toward low complexity; sequence GGQSSVGRSQ. Fibronectin type-III domains lie at 791–882, 884–976, and 981–1081; these read VPYP…ARAG, VPSQ…TLPA, and APLD…LAPA. Disordered regions lie at residues 1083–1311, 1330–1479, and 1501–1601; these read LPAR…SDEE, FSIP…CSRG, and YDSE…RGVR. The segment covering 1098–1116 has biased composition (low complexity); that stretch reads ARAPLASASPGPGDPSSPL. Basic and acidic residues predominate over residues 1138–1147; sequence EMAKGSHEDP. Polar residues predominate over residues 1201 to 1218; it reads ASSSTQGARAQQAPNTEM. Acidic residues predominate over residues 1259-1274; that stretch reads DIQEEEEEEEEEEEEE. Residues 1278-1292 are compositionally biased toward polar residues; it reads RTCSFQKQVAGNSIR. Residues 1333-1346 show a composition bias toward acidic residues; sequence PEEEEEEEEDEEEE. Basic and acidic residues-rich tracts occupy residues 1420–1429 and 1554–1586; these read RPPDPREHCS and AWEKGEPERRGRSATGRAKEPLSRATETGEARG. In terms of domain architecture, SH3 2 spans 1625 to 1693; the sequence is LPVRIFVALF…PCNMVAEVAV (69 aa). 2 disordered regions span residues 1723-1761 and 1823-1857; these read VYSTAHTTGPPPKPRRSKKAESEGPAQPCPGPPKLVPSA and SNFLEGPGPEAGGLDREPRTPQAESQRTRRRRVQC. In terms of domain architecture, SH3 3 spans 1764–1831; that stretch reads KAPHSMVAAF…PSNFLEGPGP (68 aa).

This sequence belongs to the RIMBP family. Interacts with RIMS1 and RIMS2. Interacts with TSPO. Interacts with CACNA1A. As to expression, predominantly expressed in brain, pituitary gland and thymus in adults. In adult brain, highest expression found in temporal lobe and the putamen, followed by amygdala, caudate nucleus, cerebral cortex, occipital and frontal lobe. A high expression level is also observed in fetal tissues like brain, heart, kidney and thymus.

The protein localises to the cytoplasm. It localises to the mitochondrion. Its function is as follows. Required for synaptic transmission regulation. It probably controls the recruitement of voltage-gated calcium channels to the presynaptic membrane, and modulates neurotransmitter release. The sequence is that of Peripheral-type benzodiazepine receptor-associated protein 1 from Homo sapiens (Human).